Reading from the N-terminus, the 380-residue chain is uncharacterized protein (380 aa).

It belongs to the metallo-dependent hydrolases superfamily.

This is an uncharacterized protein from Methanocaldococcus jannaschii (strain ATCC 43067 / DSM 2661 / JAL-1 / JCM 10045 / NBRC 100440) (Methanococcus jannaschii).